The sequence spans 338 residues: Protein WVD2-like 2 (338 aa).

Residues 1–14 are compositionally biased toward basic and acidic residues; that stretch reads MGRELVDKHMDKKA. Positions 1–150 are disordered; that stretch reads MGRELVDKHM…SFSVASSSAT (150 aa). Composition is skewed to polar residues over residues 15–37 and 59–69; these read NSLT…STNE and QGITETPGSHK. Residues 100–115 are compositionally biased toward low complexity; that stretch reads NNSLGNGASHNSSSAS. Positions 128 to 138 are enriched in basic and acidic residues; the sequence is RIPDHKMHHDE. Residues 177-214 adopt a coiled-coil conformation; the sequence is REFYQKLEEKQKALEAEKRENEKRLKEEQEAVTKQLRK. Positions 222–338 are disordered; sequence PVPSFYQEGP…GENGVGVVEE (117 aa). The span at 288-300 shows a compositional bias: polar residues; the sequence is TNSVPRTPNSSSK.

Belongs to the TPX2 family. As to expression, expressed in seedlings.

The protein resides in the cytoplasm. It localises to the cytoskeleton. In terms of biological role, microtubule-associated protein (MAP) that regulates the orientation of interphase cortical microtubules. The chain is Protein WVD2-like 2 from Arabidopsis thaliana (Mouse-ear cress).